We begin with the raw amino-acid sequence, 425 residues long: MSRNQQLFEQSQKFIPGGVNSPVRAFKSVGGTPVFFRKGEGAYAWDADDKSYIDYVGSWGPLILGHAHPEVVDAVYAAAKNGLTFGAPTEAELEIAELLCRLVPSIEQVRLVSSGTEATMSAIRLARGYTARNRIIKFEGCYHGHDDALLVKAGSGALTFGHPSSAGVPVETASSTVVLDYNDLAGVEQAFNQFGAEIAAVIVEPVAGNMNLIAPQPGFLAGLRELCTRHGSVLIFDEVMTGFRVGLECAQGLYGIKPDLTTLGKVIGGGMPMAAFGGRREIMQCLAPVGAVYQAGTLSGNPVAVAAGLATLKLVQVPGFYDKLAARTRKLTEGLAAAAAKQGVVFCAEAVGGMFGLYFRESAPKSYAEVMSCDREAFNGFFHAMLEEGIYFAPSAFEAGFVSAAHGDAEISKTLATAEKIFARE.

Residue K265 is modified to N6-(pyridoxal phosphate)lysine.

The protein belongs to the class-III pyridoxal-phosphate-dependent aminotransferase family. HemL subfamily. Homodimer. Requires pyridoxal 5'-phosphate as cofactor.

It is found in the cytoplasm. It catalyses the reaction (S)-4-amino-5-oxopentanoate = 5-aminolevulinate. Its pathway is porphyrin-containing compound metabolism; protoporphyrin-IX biosynthesis; 5-aminolevulinate from L-glutamyl-tRNA(Glu): step 2/2. The sequence is that of Glutamate-1-semialdehyde 2,1-aminomutase from Nitrosospira multiformis (strain ATCC 25196 / NCIMB 11849 / C 71).